Consider the following 589-residue polypeptide: Cytoplasmic polyadenylation element-binding protein 2 (589 aa).

2 disordered regions span residues 1-103 (MPPP…QAAA) and 118-140 (PLLK…SMSW). A compositionally biased stretch (low complexity) spans 24 to 33 (FFPSFSPVSP). The segment covering 44-53 (SGGGGGGFGG) has biased composition (gly residues). Pro residues predominate over residues 60 to 81 (VPPPPPPAMNIPQQQPPPPAAP). Composition is skewed to low complexity over residues 82-103 (QQPQ…QAAA) and 130-140 (SSGWGTGSMSW). Ser-89 carries the phosphoserine modification. RRM domains lie at 332–423 (RKVF…PWNL) and 440–522 (KTIF…PYVL).

The protein belongs to the RRM CPEB family. As to quaternary structure, interacts with TENT2/GLD2.

It localises to the cytoplasm. In terms of biological role, may play a role in translational regulation of stored mRNAs in transcriptionally inactive haploid spermatids. Binds to poly(U) RNA oligomers. Required for cell cycle progression, specifically for the transition from metaphase to anaphase. The polypeptide is Cytoplasmic polyadenylation element-binding protein 2 (CPEB2) (Homo sapiens (Human)).